The sequence spans 344 residues: Lipopolysaccharide heptosyltransferase 3 (344 aa).

Belongs to the glycosyltransferase 9 family.

It carries out the reaction an L-alpha-D-Hep-(1-&gt;3)-4-O-phospho-L-alpha-D-Hep-(1-&gt;5)-[alpha-Kdo-(2-&gt;4)]-alpha-Kdo-(2-&gt;6)-lipid A + ADP-L-glycero-beta-D-manno-heptose = an L-alpha-D-Hep-(1-&gt;7)-L-alpha-D-Hep-(1-&gt;3)-4-O-phospho-L-alpha-D-Hep-(1-&gt;5)-[alpha-Kdo-(2-&gt;4)]-alpha-Kdo-(2-&gt;6)-lipid A + ADP + H(+). The catalysed reaction is L-alpha-D-Hep-(1-&gt;3)-4-O-phospho-L-alpha-D-Hep-(1-&gt;5)-[alpha-Kdo-(2-&gt;4)]-alpha-Kdo-(2-&gt;6)-lipid A (E. coli) + ADP-L-glycero-beta-D-manno-heptose = L-alpha-D-Hep-(1-&gt;7)-L-alpha-D-Hep-(1-&gt;3)-4-O-phospho-L-alpha-D-Hep-(1-&gt;5)-[alpha-Kdo-(2-&gt;4)]-alpha-Kdo-(2-&gt;6)-lipid A (E. coli) + ADP + H(+). It participates in bacterial outer membrane biogenesis; LPS core biosynthesis. Glycosyltransferase involved in the biosynthesis of the core oligosaccharide region of lipopolysaccharide (LPS). Catalyzes the addition of the third heptose unit (HepIII) to the second heptose unit (HepII) of the phospho-Hep2-Kdo2-lipid A module. In Escherichia coli (strain K12), this protein is Lipopolysaccharide heptosyltransferase 3.